Reading from the N-terminus, the 369-residue chain is Maltose/maltodextrin import ATP-binding protein MalK (369 aa).

Residues 4–234 form the ABC transporter domain; it reads VQLRNVTKAW…PADRFVAGFI (231 aa). Residue 36 to 43 participates in ATP binding; it reads GPSGCGKS.

It belongs to the ABC transporter superfamily. Maltooligosaccharide importer (TC 3.A.1.1.1) family. In terms of assembly, the complex is composed of two ATP-binding proteins (MalK), two transmembrane proteins (MalG and MalK) and a solute-binding protein (MalE).

It is found in the cell inner membrane. It catalyses the reaction D-maltose(out) + ATP + H2O = D-maltose(in) + ADP + phosphate + H(+). Functionally, part of the ABC transporter complex MalEFGK involved in maltose/maltodextrin import. Responsible for energy coupling to the transport system. This Salmonella typhi protein is Maltose/maltodextrin import ATP-binding protein MalK.